The chain runs to 200 residues: Nascent polypeptide-associated complex subunit alpha (200 aa).

The span at 1–19 (MADPRIEELPDEETKKPTV) shows a compositional bias: basic and acidic residues. Disordered regions lie at residues 1–52 (MADP…SRNE) and 120–165 (QQLA…EDKD). A compositionally biased stretch (acidic residues) spans 20-34 (EELDESSDEESDAEA). The 66-residue stretch at 49 to 114 (SRNEKKARKA…AKIEDLNASA (66 aa)) folds into the NAC-A/B domain. A compositionally biased stretch (basic and acidic residues) spans 127–143 (AEHDHAGHTHDHKHEAA). Over residues 144-160 (KEEEEEEDDGEEVDAEG) the composition is skewed to acidic residues. The 40-residue stretch at 161–200 (IEDKDIELVMTQANVSRKKAIKALKENDNDIVNSIMALSV) folds into the UBA domain.

It belongs to the NAC-alpha family. In terms of assembly, part of the nascent polypeptide-associated complex (NAC), consisting of EGD2 and EGD1. NAC associates with ribosomes via EGD1.

Its subcellular location is the cytoplasm. It localises to the nucleus. Component of the nascent polypeptide-associated complex (NAC), a dynamic component of the ribosomal exit tunnel, protecting the emerging polypeptides from interaction with other cytoplasmic proteins to ensure appropriate nascent protein targeting. The NAC complex also promotes mitochondrial protein import by enhancing productive ribosome interactions with the outer mitochondrial membrane and blocks the inappropriate interaction of ribosomes translating non-secretory nascent polypeptides with translocation sites in the membrane of the endoplasmic reticulum. EGD2 may also be involved in transcription regulation. This Chaetomium globosum (strain ATCC 6205 / CBS 148.51 / DSM 1962 / NBRC 6347 / NRRL 1970) (Soil fungus) protein is Nascent polypeptide-associated complex subunit alpha (EGD2).